Reading from the N-terminus, the 419-residue chain is MTTQLEQAWELAKQRFAAVGIDVEEALRQLDRLPVSMHCWQGDDVSGFENPEGSLTGGIQATGNYPGKARNASELRADLEQAMRLIPGPKRLNLHAIYLESDTSVARDQIKPEHFKNWVEWAKANQLGLDFNPSCFSHPLSADGFTLSHADDSIRQFWIDHCKASRRVSAYFGEQLGTPSVMNIWIPDGMKDITVDRLAPRQRLLAALDEVISEKLDPAHHIDAVESKLFGIGAESYTVGSNEFYMGYATSRQTALCLDAGHFHPTEVISDKISAAMLYVPQLLLHVSRPVRWDSDHVVLLDDETQAIASEIVRHDLFDRVHIGLDFFDASINRIAAWVIGTRNMKKALLRALLEPTTELRKLEAAGDYTARLALLEEQKSLPWQAVWEMYCQRHDTPVGSEWLESVRAYEKAILSQRG.

Positions 262, 294, and 296 each coordinate Mn(2+).

The protein belongs to the rhamnose isomerase family. In terms of assembly, homotetramer. Mn(2+) serves as cofactor.

The protein localises to the cytoplasm. The catalysed reaction is L-rhamnopyranose = L-rhamnulose. The protein operates within carbohydrate degradation; L-rhamnose degradation; glycerone phosphate from L-rhamnose: step 1/3. In terms of biological role, catalyzes the interconversion of L-rhamnose and L-rhamnulose. The polypeptide is L-rhamnose isomerase (Escherichia coli O7:K1 (strain IAI39 / ExPEC)).